The sequence spans 766 residues: TRP-like ion channel protein flc1 (766 aa).

Positions 1-24 (MRIPLFILTFLFTFFSLATTPVSA) are cleaved as a signal peptide. Residues 25–170 (DSGVLYTDAV…ANGKTAHQKG (146 aa)) are Lumenal-facing. Asn-56, Asn-73, Asn-89, and Asn-109 each carry an N-linked (GlcNAc...) asparagine glycan. The helical transmembrane segment at 171-191 (VIWASAIFTLVAFLVAIWHTA) threads the bilayer. Topologically, residues 192-205 (SGTSTSPIQYRWFD) are cytoplasmic. Residues 206–226 (ILFIFQVAAASGLLHLNYPLV) form a helical membrane-spanning segment. Residues 227–351 (YTNFVQNFHW…RIPEANAYDT (125 aa)) are Lumenal-facing. An N-linked (GlcNAc...) asparagine glycan is attached at Asn-325. The helical transmembrane segment at 352–372 (IWFVFLALIGIFIAFHVLLFG) threads the bilayer. At 373–407 (MVLLFDRMGRNRSHLGWAARLRRMWWPFCVGNSLR) the chain is on the cytoplasmic side. A helical transmembrane segment spans residues 408–428 (LCLIGFFPIWIFAFWQFHIGD). Residues 429-432 (SGLS) are Lumenal-facing. A helical membrane pass occupies residues 433–453 (IFWAVFGILLTLVPLATAFLL). The Cytoplasmic segment spans residues 454–493 (SLLRARRISSTSPEINSLYTSFRYFHSIGVLYRQYRQKFH). Residues 494–514 (YFWFTPFVLAMIARAGFIAFG) traverse the membrane as a helical segment. Over 515-517 (PAS) the chain is Lumenal. The helical transmembrane segment at 518-538 (AWAQVIGNLVVEFIVLVALLA) threads the bilayer. The Cytoplasmic portion of the chain corresponds to 539–548 (CRPHKDKKGD). The chain crosses the membrane as a helical span at residues 549-569 (WLGAFLSICRLIAIGLLIAFI). Topologically, residues 570 to 580 (PDMNVKPIPRA) are lumenal. A helical transmembrane segment spans residues 581-601 (VIAFVIIVFYGVPVVFLFVGF). Residues 602 to 766 (LWNIGYGYLW…TDEKQWSRRY (165 aa)) are Cytoplasmic-facing. The disordered stretch occupies residues 704–766 (ASSADGALSP…TDEKQWSRRY (63 aa)). The segment covering 757-766 (TDEKQWSRRY) has biased composition (basic and acidic residues).

This sequence belongs to the transient receptor potential (TRP) ion channel family.

The protein localises to the endoplasmic reticulum membrane. Endoplasmic reticulum membrane flavin carrier protein that plays a crucial role in Ca(2+) signaling/homeostasis via the modulation of the calcineurin-Crz1 stress response pathway which is important for both stress responses and virulence. This chain is TRP-like ion channel protein flc1, found in Cryptococcus neoformans var. grubii serotype A (strain H99 / ATCC 208821 / CBS 10515 / FGSC 9487) (Filobasidiella neoformans var. grubii).